The chain runs to 399 residues: Transaminase BacF (399 aa).

Residues 103–104 (GK), tyrosine 128, asparagine 178, tyrosine 209, and 236–238 (SFS) contribute to the pyridoxal 5'-phosphate site. An N6-(pyridoxal phosphate)lysine modification is found at lysine 239. Pyridoxal 5'-phosphate is bound at residue arginine 247.

The protein belongs to the class-I pyridoxal-phosphate-dependent aminotransferase family. As to quaternary structure, homodimer. Pyridoxal 5'-phosphate is required as a cofactor.

The protein localises to the cytoplasm. Its pathway is antibiotic biosynthesis; bacilysin biosynthesis. In terms of biological role, part of the bacABCDEF operon responsible for the biosynthesis of the nonribosomally synthesized dipeptide antibiotic bacilysin, composed of L-alanine and L-anticapsin. Bacilysin is an irreversible inactivator of the glutaminase domain of glucosamine synthetase. Catalyzes the reductive amination of the C2 ketone of tetrahydro-hydroxyphenylpyruvate (H4HPP), with L-Phe as an amino donor, to yield tetrahydrotyrosine (H4Tyr) diastereomer. D-Phe is not an effective amino donor. BacF associated to BacG converts 3E,7R- and 3Z,7R-ex-H2HPP to 2S,4R,7R- and 2S,4S,7R-H4Tyr, respectively. Given that bacilysin has the 2S,4S stereochemistry in its anticapsin moiety, it is likely that the 2S,4S-H4Tyr is the diastereomer used for the biosynthesis. In Bacillus subtilis (strain 168), this protein is Transaminase BacF.